The following is a 370-amino-acid chain: ECF RNA polymerase sigma factor SigG (370 aa).

The segment at glutamate 63–arginine 129 is sigma-70 factor domain-2. The Polymerase core binding signature appears at aspartate 85 to glutamine 88. The segment at leucine 180–leucine 232 is sigma-70 factor domain-4. The H-T-H motif DNA-binding region spans serine 207 to glutamine 226.

It belongs to the sigma-70 factor family. ECF subfamily. As to quaternary structure, interacts transiently with the RNA polymerase catalytic core formed by RpoA, RpoB, RpoC and RpoZ (2 alpha, 1 beta, 1 beta' and 1 omega subunit) to form the RNA polymerase holoenzyme that can initiate transcription.

In terms of biological role, sigma factors are initiation factors that promote the attachment of RNA polymerase to specific initiation sites and are then released. Extracytoplasmic function (ECF) sigma factors are held in an inactive form by a cognate anti-sigma factor until released, although no anti-sigma factor is known for this protein. May be involved in host intracellular survival after infection (strains H37Rv and CDC 1551). A role in the SOS response is controversial; it has been seen in strain CDC 1551 but not in H37Rv. This is ECF RNA polymerase sigma factor SigG (sigG) from Mycobacterium tuberculosis (strain CDC 1551 / Oshkosh).